A 128-amino-acid chain; its full sequence is Small ribosomal subunit protein eS8 (128 aa).

The protein belongs to the eukaryotic ribosomal protein eS8 family. As to quaternary structure, part of the 30S ribosomal subunit.

This chain is Small ribosomal subunit protein eS8, found in Methanococcus maripaludis (strain DSM 14266 / JCM 13030 / NBRC 101832 / S2 / LL).